Consider the following 304-residue polypeptide: MTRPRPPLGPAMAGAVDLSGIKQRAQQNAAASTDADRALSTPSGVTEITEANFEDEVIVRSDEVPVVVLLWSPRSEVCVDLLDTLSGLAAAAKGKWSLASVNVDVAPRVAQIFGVQAVPTVVALAAGQPISSFQGLQPADQLSRWVDSLLSATAGKLKGAASSEESTEVDPAVAQARQQLEDGDFVAARKSYQAILDANPGSVEAKAAIRQIEFLIRATAQRPDAVSVADSLSDDIDAAFAAADVQVLNQDVSAAFERLIALVRRTSGEERTRVRTRLIELFELFDPADPEVVAGRRNLANALY.

An N-terminal signal peptide occupies residues 1 to 15 (MTRPRPPLGPAMAGA). The Thioredoxin domain maps to 28–151 (NAAASTDADR…LSRWVDSLLS (124 aa)).

This is an uncharacterized protein from Mycobacterium bovis (strain ATCC BAA-935 / AF2122/97).